Reading from the N-terminus, the 2058-residue chain is MDTTISQQMDHFLESPLVTWVKTFGPCGNENESKLAMYMELVDGVFLNKIMVQIDPRPSNQRVNKHVNNDVNRRVQNLTILVRHIKAYYQEVLQQLIVMNLPNVLLISKDPLTDKSMEELKKILLLMLGCAVQCERKEEYIERIKQLDIETQAGIVSHIQEVTHNQENVFDLQWLELSDMAPEELDSLSRNMALHLKRLIDERDECKEVIVDLTQERDYLQFQNHPSPVKSSSPDTSANMVSHLSSEDKKHLAVELAESKAKLRRIRQELEEKSELLLDTKHEVERLNLELQKIKQENFQLASEARTARTYRDEIDSLKERASKVDRLENELARCKEKLHDVDFYKARMDELREDNMILIETKSMLEEQLAAARTRTDKLHELEKENLQLKSKIHDLELDRYSDKNRIEELLEENMVLEIAQKQSMNESAQLGWELDQLSKSTDLSDARKSFVFELNETTSSKILKLEKENQSLQNIIQDLREASLTLEEGNLKGQEWEKENQQLSKKIENLNQQIERERQSSLDLESLSEDLLKEKDQLSQALENIKSQKERQIKELEQENKHLIQTLEAVRQRSQVSTEARVKDIEMENRILHETIKDTSSKMNELEYEKKQLQKAFDQSKEQVEKLDKMEKEVHRLEKQNEILTKKVTSIKIVEEKMQGLEKENEVLEGENIVLKKSLDTLQNVTIKLEVLESENKQLDEENLELRRAVEAMRFSCAKSTQIERENNELQKEKEELQKNVELLKALGKKSERLEVSYQGLNDENWRLQQMLDTGNKKINDLEKELHDTEKENKDLQRTLEEMKICNKRLERMEEENKAKEQEMVQLEKDNKILQKESKRLWQQVELKDAILDDNTVKLADLEKENRALEKEISKLRDLSTKTRDLERENKDLLQQMTVDKRTLATLREDLVLEKLKTQQMSSELDKLSLELEKIGLNKESMLQDENSNAEKKYKLLENKIESTLKTTLAVKENKIVALEMKIEETSSLNQQLQNELNSIKKDIIASKENLRGAAHNSYTQLSSKQDCNSQINGQRETTVELLKFKDRTIELERNNAALQAEKKLFREQLQHLESHNLNLSSQMGTLQKQVTFLQEHNTALQTQTANLQVENATATSQVASLKSQISQFQNQLSARESENEILQQQKEHLRVTHESLLQDHEQLGSLYERQSAEYEGMISQHSSLKSQYKSLEQAHRSLEESYSTLIKHKKELEDLDAVLKKEQDVLQQERRKNFVAMEENQKLKTDLERLNFLHGELQTEYSSLHKHTKEVKTSLNNAQMELNRWQARFDELKEQHQTMDISLTKLDNHCELLTRLKSNLEEENHHLLSQIQMLSQQNQMLLEQSMETKEQYHEEQKQYIDKLHDLRRQKEKLEEKIMDQYKFYDPTPKKKSHWSGAKAIAKLIKPKKEPSRESVKSPTDVQSKTMDNAEMAASPSSMRPLRLQQESLDNSSLGSDEKGSPKVLASKVLVEVAQRQHRMSYHGSSSEQTDGPEHLSRSRRMESGSRAFSTSTIHLTAPAHNAKVPHLSRPKGYNSDDNQSDQLHEAESNAGSSRVPWTSSLEVSRSASNSSSPLTLKGRPESVSSEDMIPTKDIATLSRESNLYHPNAVMLGATKNRESPVNRNSLHLYDYPEKKNSSRTPTRPRPGSPGSEMVTLEEFLQESSRQSPPSRRHSLNDSELITLHQFLFEAETLHPSSQSPSPTLHLKDPSQTAVPKSLPSAENCEWRKRADRASRRAASLYIPRDMVTNRDDMLGDLFKKTEDPPDIRSPMSELIFKDAAQMPTSYVSPTVKVTGNTTKPGQYVKPHPRQLDAPLNVTSSLLHQANVYSATSSSQSPEPQALSPHGAMGSRGNSLSRAFSLASADLLKENGPEVVMQEKSDVETPVGKDFGRYMIRSSTPLGSQSSLREKPQSARMQHMLRGDDRQYRSLDSRRLSLALPKEETTPPQPAPSASSLQQHYTLGHGAIRGKPKLLSRSGEVALVSPVRPISSIPELETTQGLASAGPGKSRSTSPDCSPAPVCEEEPNKSETLKSTPASPDPSADPQTVWYEYGCV.

The Calponin-homology (CH) domain occupies His-11–Ala-131. Coiled-coil stretches lie at residues His-195–Gln-221, Glu-247–Glu-428, Glu-455–Ala-1016, Glu-1043–Leu-1082, and Ala-1108–Asp-1388. Disordered regions lie at residues Leu-1406–Leu-1444, His-1480–Ile-1592, Thr-1617–Glu-1655, Leu-1696–Ala-1724, Tyr-1831–Ser-1857, Leu-1940–Leu-1959, and Pro-1988–Val-2051. A compositionally biased stretch (basic and acidic residues) spans Pro-1409–Val-1418. Residues Lys-1419 to Met-1429 show a composition bias toward polar residues. Positions Gly-1494–Ser-1506 are enriched in basic and acidic residues. Residues Asn-1552–Leu-1577 are compositionally biased toward polar residues. 2 consecutive short sequence motifs (GBA) follow at residues Gly-1653–Arg-1675 and His-1676–His-1697. Polar residues predominate over residues Tyr-1831 to Glu-1841. Positions Pro-2039–Pro-2048 are enriched in low complexity. Residues Tyr-2055–Val-2058 carry the PDZ-binding motif.

It belongs to the CCDC88 family. As to quaternary structure, interacts with dvl2/dsh via the PDZ-binding motif. Expressed weakly in gastrulae, with slightly stronger expression in the dorsal region. In neurulae, expressed in the neural plate with strong expression in the presumptive mesencephalic region. At the tailbud stage, expressed in somatic cells and in part of the tail. Also strongly expressed in regions of the head including eye vesicles, otic vesicles, olfactory placode and the pharyngeal cavity.

The protein localises to the cytoplasm. It localises to the cell junction. Its function is as follows. Positive regulator of Wnt signaling, acting synergistically with dvl2/dsh. Functions upstream of ctnnb1/beta-catenin in the canonical Wnt pathway, and also activates jnk in the Wnt/planar cell polarity (PCP) pathway. Acts as a non-receptor guanine nucleotide exchange factor which binds to and activates guanine nucleotide-binding protein G(i) alpha subunits. This promotes apical cell constriction and subsequent bending of the neural plate during neurulation via arhgef18. This Xenopus laevis (African clawed frog) protein is Protein Daple (ccdc88c).